The sequence spans 466 residues: Amino acid permease 4 (466 aa).

Topologically, residues 1-22 (MDVPRPAFKCFDDDGRLKRSGT) are cytoplasmic. 2 helical membrane passes run 23 to 43 (VWTASAHIITAVIGSGVLSLA) and 44 to 64 (WAIGQLGWIAGPTVMLLFSFV). The Cytoplasmic segment spans residues 65 to 111 (TYYSSTLLSDCYRTGDPVSGKRNYTYMDAVRSILGGFRFKICGLIQY). The helical transmembrane segment at 112 to 132 (LNLFGITVGYTIAASISMMAI) threads the bilayer. Residues 133–177 (KRSNCFHESGGKNPCHMSSNPYMIMFGVTEILLSQIKDFDQIWWL) lie on the Extracellular side of the membrane. The helical transmembrane segment at 178–198 (SIVAAIMSFTYSAIGLALGII) threads the bilayer. At 199 to 226 (QVAANGVVKGSLTGISIGAVTQTQKIWR) the chain is on the cytoplasmic side. The chain crosses the membrane as a helical span at residues 227-247 (TFQALGDIAFAYSYSVVLIEI). Residues 248–266 (QDTVRSPPAESKTMKIATR) lie on the Extracellular side of the membrane. The chain crosses the membrane as a helical span at residues 267-287 (ISIAVTTTFYMLCGCMGYAAF). Residues 288–290 (GDK) are Cytoplasmic-facing. The chain crosses the membrane as a helical span at residues 291–311 (APGNLLTGFGFYNPFWLLDVA). Over 312-313 (NA) the chain is Extracellular. A helical transmembrane segment spans residues 314–334 (AIVIHLVGAYQVFAQPIFAFI). Residues 335 to 369 (EKQAAARFPDSDLVTKEYEIRIPGFRSPYKVNVFR) lie on the Cytoplasmic side of the membrane. Residues 370-390 (AVYRSGFVVLTTVISMLMPFF) traverse the membrane as a helical segment. Residues 391-392 (ND) are Extracellular-facing. Residues 393–413 (VVGILGALGFWPLTVYFPVEM) traverse the membrane as a helical segment. Residues 414-435 (YIRQRKVERWSMKWVCLQMLSC) are Cytoplasmic-facing. Residues 436–456 (GCLMITLVAGVGSIAGVMLDL) form a helical membrane-spanning segment. Topologically, residues 457–466 (KVYKPFKTTY) are extracellular.

The protein belongs to the amino acid/polyamine transporter 2 family. Amino acid/auxin permease (AAAP) (TC 2.A.18.2) subfamily. In terms of tissue distribution, expressed in leaves, stems and flowers.

It localises to the cell membrane. Its activity is regulated as follows. Inhibited by 2,4-dinitrophenol. Amino acid-proton symporter. Stereospecific transporter with a broad specificity for neutral amino acids, favoring small amino acids such as alanine, asparagine and glutamine. Also accepts large aromatic residues such as in phenlalanine or tyrosine. The chain is Amino acid permease 4 (AAP4) from Arabidopsis thaliana (Mouse-ear cress).